Consider the following 861-residue polypeptide: DNA mismatch repair protein MutS (861 aa).

618 to 625 provides a ligand contact to ATP; the sequence is GPNMGGKS.

Belongs to the DNA mismatch repair MutS family.

Functionally, this protein is involved in the repair of mismatches in DNA. It is possible that it carries out the mismatch recognition step. This protein has a weak ATPase activity. In Shewanella sp. (strain ANA-3), this protein is DNA mismatch repair protein MutS.